A 149-amino-acid polypeptide reads, in one-letter code: uncharacterized protein (149 aa).

This is an uncharacterized protein from Schizosaccharomyces pombe (strain 972 / ATCC 24843) (Fission yeast).